A 318-amino-acid polypeptide reads, in one-letter code: Probable cell division protein WhiA (318 aa).

A DNA-binding region (H-T-H motif) is located at residues 281-314; sequence SLKELGQMLVPPVGKSGVNHRLRKIEEISKKLKE.

This sequence belongs to the WhiA family.

Functionally, involved in cell division and chromosome segregation. In Thermoanaerobacter pseudethanolicus (strain ATCC 33223 / 39E) (Clostridium thermohydrosulfuricum), this protein is Probable cell division protein WhiA.